Reading from the N-terminus, the 155-residue chain is Large ribosomal subunit protein uL13 (155 aa).

Belongs to the universal ribosomal protein uL13 family. As to quaternary structure, part of the 50S ribosomal subunit.

In terms of biological role, this protein is one of the early assembly proteins of the 50S ribosomal subunit, although it is not seen to bind rRNA by itself. It is important during the early stages of 50S assembly. In Rickettsia akari (strain Hartford), this protein is Large ribosomal subunit protein uL13.